Consider the following 171-residue polypeptide: MNHFELFGLPPQFSLDGSLLSSQFRELQKRFHPDNFATASERDRLLAVQKAAQINDAYQVLKNPISRAEYLLSQNGLEIRGEQQTMQDPMFLMEQMELREELEEIPHGSDAESALAAFDARVSKMYKQHLASIEQELNDAQWPQAADRVRKLKFIAKLKNEIELVEEKLFG.

The 73-residue stretch at 2-74 (NHFELFGLPP…ISRAEYLLSQ (73 aa)) folds into the J domain.

It belongs to the HscB family. In terms of assembly, interacts with HscA and stimulates its ATPase activity.

Its function is as follows. Co-chaperone involved in the maturation of iron-sulfur cluster-containing proteins. Seems to help targeting proteins to be folded toward HscA. This is Co-chaperone protein HscB homolog from Vibrio vulnificus (strain YJ016).